The sequence spans 458 residues: RuvB-like helicase 1 (458 aa).

ATP is bound at residue Gly-71–Thr-78.

Belongs to the RuvB family. As to quaternary structure, may form heterododecamers with RVB2. Component of the SWR1 chromatin remodeling complex, the INO80 chromatin remodeling complex, and of the R2TP complex.

Its subcellular location is the nucleus. The catalysed reaction is ATP + H2O = ADP + phosphate + H(+). Its function is as follows. DNA helicase which participates in several chromatin remodeling complexes, including the SWR1 and the INO80 complexes. The SWR1 complex mediates the ATP-dependent exchange of histone H2A for the H2A variant HZT1 leading to transcriptional regulation of selected genes by chromatin remodeling. The INO80 complex remodels chromatin by shifting nucleosomes and is involved in DNA repair. Also involved in pre-rRNA processing. The protein is RuvB-like helicase 1 (RVB1) of Gibberella zeae (strain ATCC MYA-4620 / CBS 123657 / FGSC 9075 / NRRL 31084 / PH-1) (Wheat head blight fungus).